We begin with the raw amino-acid sequence, 401 residues long: Acetate kinase (401 aa).

Residue N9 coordinates Mg(2+). Residue K16 participates in ATP binding. R88 provides a ligand contact to substrate. The active-site Proton donor/acceptor is the D147. ATP-binding positions include 207-211 (HLGNG), 282-284 (DCR), and 333-337 (GIGEN). Mg(2+) is bound at residue E388.

It belongs to the acetokinase family. As to quaternary structure, homodimer. Mg(2+) is required as a cofactor. It depends on Mn(2+) as a cofactor.

It localises to the cytoplasm. The enzyme catalyses acetate + ATP = acetyl phosphate + ADP. It functions in the pathway metabolic intermediate biosynthesis; acetyl-CoA biosynthesis; acetyl-CoA from acetate: step 1/2. In terms of biological role, catalyzes the formation of acetyl phosphate from acetate and ATP. Can also catalyze the reverse reaction. The protein is Acetate kinase of Haemophilus influenzae (strain ATCC 51907 / DSM 11121 / KW20 / Rd).